The sequence spans 224 residues: Flagellar L-ring protein (224 aa).

The N-terminal stretch at 1–15 (MKWYLVALSGLLLSG) is a signal peptide. The N-palmitoyl cysteine moiety is linked to residue Cys-16. Cys-16 carries S-diacylglycerol cysteine lipidation.

This sequence belongs to the FlgH family. As to quaternary structure, the basal body constitutes a major portion of the flagellar organelle and consists of four rings (L,P,S, and M) mounted on a central rod.

The protein localises to the cell outer membrane. It is found in the bacterial flagellum basal body. Functionally, assembles around the rod to form the L-ring and probably protects the motor/basal body from shearing forces during rotation. The sequence is that of Flagellar L-ring protein from Trichlorobacter lovleyi (strain ATCC BAA-1151 / DSM 17278 / SZ) (Geobacter lovleyi).